The chain runs to 369 residues: MSSVTLHNVSKAYGETIISKNINLEIQEGEFIVFVGPSGCGKSTILRMIAGLEDVTSGDLLINNIRMNDVPPAKRGVGMVFQSYALYPHLSVADNMSFGMKLAGAKKSDIQQRVKQIAEMLQLAHLLDRRPKALSGGQRQRVAIGRTLVAEPSVFLLDEPLSNLDAALRVQMRIEISRLHKRLQRTMIYVTHDQVEAMTLADRIVVLDGGDVAQIGKPLELYHYPVNRFVASFIGSPKMNFLPVKVTATAIDQVQITLPNRQQIWLPVESKGVKVGSNVSLGIRPEHLLPSDIADVTLEGIVQVVEQLGNETQVHIEIPAIHQNLVYRQPDVVLVEEGSTFTIGLPPHRCHLFREDGTACQRLHEEPGV.

The 231-residue stretch at Val-4–Ile-234 folds into the ABC transporter domain. Position 36–43 (Gly-36–Ser-43) interacts with ATP.

The protein belongs to the ABC transporter superfamily. Maltooligosaccharide importer (TC 3.A.1.1.1) family. In terms of assembly, the complex is composed of two ATP-binding proteins (MalK), two transmembrane proteins (MalG and MalK) and a solute-binding protein (MalE).

It localises to the cell inner membrane. It catalyses the reaction D-maltose(out) + ATP + H2O = D-maltose(in) + ADP + phosphate + H(+). In terms of biological role, part of the ABC transporter complex MalEFGK involved in maltose/maltodextrin import. Responsible for energy coupling to the transport system. This Photorhabdus laumondii subsp. laumondii (strain DSM 15139 / CIP 105565 / TT01) (Photorhabdus luminescens subsp. laumondii) protein is Maltose/maltodextrin import ATP-binding protein MalK.